Reading from the N-terminus, the 411-residue chain is Glucose-1-phosphate adenylyltransferase (411 aa).

Alpha-D-glucose 1-phosphate-binding positions include G164, 179–180 (EK), and S197.

It belongs to the bacterial/plant glucose-1-phosphate adenylyltransferase family. As to quaternary structure, homotetramer.

The enzyme catalyses alpha-D-glucose 1-phosphate + ATP + H(+) = ADP-alpha-D-glucose + diphosphate. Its pathway is glycan biosynthesis; glycogen biosynthesis. Its function is as follows. Involved in the biosynthesis of ADP-glucose, a building block required for the elongation reactions to produce glycogen. Catalyzes the reaction between ATP and alpha-D-glucose 1-phosphate (G1P) to produce pyrophosphate and ADP-Glc. The sequence is that of Glucose-1-phosphate adenylyltransferase from Corynebacterium kroppenstedtii (strain DSM 44385 / JCM 11950 / CIP 105744 / CCUG 35717).